Consider the following 355-residue polypeptide: Fructose-bisphosphate aldolase, cytoplasmic isozyme (355 aa).

2 residues coordinate substrate: Arg-52 and Lys-142. Residue Glu-183 is the Proton acceptor of the active site. Lys-225 acts as the Schiff-base intermediate with dihydroxyacetone-P in catalysis.

It belongs to the class I fructose-bisphosphate aldolase family.

It is found in the cytoplasm. The enzyme catalyses beta-D-fructose 1,6-bisphosphate = D-glyceraldehyde 3-phosphate + dihydroxyacetone phosphate. The protein operates within carbohydrate degradation; glycolysis; D-glyceraldehyde 3-phosphate and glycerone phosphate from D-glucose: step 4/4. This is Fructose-bisphosphate aldolase, cytoplasmic isozyme from Zea mays (Maize).